We begin with the raw amino-acid sequence, 378 residues long: Peptide methionine sulfoxide reductase MsrA/MsrB (378 aa).

The peptide methionine sulfoxide reductase A stretch occupies residues 40–197; the sequence is QQATLAGGCF…KVRYNYYRYA (158 aa). The active site involves Cys-48. One can recognise a MsrB domain in the interval 240–362; the sequence is DEQIRAKLTS…NSAAMRFIPK (123 aa). The active-site Nucleophile is Cys-351.

This sequence in the N-terminal section; belongs to the MsrA Met sulfoxide reductase family. It in the C-terminal section; belongs to the MsrB Met sulfoxide reductase family.

It catalyses the reaction L-methionyl-[protein] + [thioredoxin]-disulfide + H2O = L-methionyl-(S)-S-oxide-[protein] + [thioredoxin]-dithiol. It carries out the reaction [thioredoxin]-disulfide + L-methionine + H2O = L-methionine (S)-S-oxide + [thioredoxin]-dithiol. The enzyme catalyses L-methionyl-[protein] + [thioredoxin]-disulfide + H2O = L-methionyl-(R)-S-oxide-[protein] + [thioredoxin]-dithiol. In terms of biological role, has an important function as a repair enzyme for proteins that have been inactivated by oxidation. Catalyzes the reversible oxidation-reduction of methionine sulfoxide in proteins to methionine. This chain is Peptide methionine sulfoxide reductase MsrA/MsrB (msrAB), found in Vibrio cholerae serotype O1 (strain ATCC 39315 / El Tor Inaba N16961).